The following is a 219-amino-acid chain: tRNA (guanine-N(7)-)-methyltransferase (219 aa).

The S-adenosyl-L-methionine site is built by glutamate 46, glutamate 71, asparagine 100, and aspartate 122. Residue aspartate 122 is part of the active site. Residues lysine 126, aspartate 158, and 199–202 each bind substrate; that span reads TEYE.

The protein belongs to the class I-like SAM-binding methyltransferase superfamily. TrmB family.

It catalyses the reaction guanosine(46) in tRNA + S-adenosyl-L-methionine = N(7)-methylguanosine(46) in tRNA + S-adenosyl-L-homocysteine. It participates in tRNA modification; N(7)-methylguanine-tRNA biosynthesis. Its function is as follows. Catalyzes the formation of N(7)-methylguanine at position 46 (m7G46) in tRNA. This chain is tRNA (guanine-N(7)-)-methyltransferase, found in Leuconostoc mesenteroides subsp. mesenteroides (strain ATCC 8293 / DSM 20343 / BCRC 11652 / CCM 1803 / JCM 6124 / NCDO 523 / NBRC 100496 / NCIMB 8023 / NCTC 12954 / NRRL B-1118 / 37Y).